Reading from the N-terminus, the 1372-residue chain is DNA-directed RNA polymerase subunit beta (1372 aa).

Belongs to the RNA polymerase beta chain family. In terms of assembly, the RNAP catalytic core consists of 2 alpha, 1 beta, 1 beta' and 1 omega subunit. When a sigma factor is associated with the core the holoenzyme is formed, which can initiate transcription.

The enzyme catalyses RNA(n) + a ribonucleoside 5'-triphosphate = RNA(n+1) + diphosphate. DNA-dependent RNA polymerase catalyzes the transcription of DNA into RNA using the four ribonucleoside triphosphates as substrates. In Nitratidesulfovibrio vulgaris (strain ATCC 29579 / DSM 644 / CCUG 34227 / NCIMB 8303 / VKM B-1760 / Hildenborough) (Desulfovibrio vulgaris), this protein is DNA-directed RNA polymerase subunit beta.